The chain runs to 217 residues: DPDKCKTIRVESWSYKYAEKVVEDASYVLNMTVVDRQSAAACTLGESFGYQKATLWVDHGCRADFKVCYLPVMPTECQTLRVESWNYKYAEKVVEGAALFINMTVEDRQSEASCDLDKSFGFYNQNSTVWVNHGCRADFNICYLKGAVTTSTINVSSWNYQYATKVLPAASCIYSMRVVNQQSAAPCTLGTTYGFVANTMWVDDGCRADFKPSYYSP.

Disulfide bonds link C5–C187, C42–C68, C61–C77, C114–C135, and C142–C206. N30 carries an N-linked (GlcNAc...) asparagine glycan. N-linked (GlcNAc...) asparagine glycans are attached at residues N102 and N126.

As to quaternary structure, homodimer; disulfide-linked. Post-translationally, contains disulfide bonds.

In terms of biological role, binds in decreasing order of affinity: galacturonic acid, D-galactosamine, methyl-alpha-D-galactopyranoside and further galactose-containing carbohydrates. Has hemagglutinating activity against human and rabbit erythrocytes. This is Lectin ADEL from Aplysia dactylomela (Spotted sea hare).